The primary structure comprises 624 residues: Glucoamylase (624 aa).

Residues 1 to 18 form the signal peptide; that stretch reads MRQFLALAAAASIAVADS. Positions 26-132 constitute a CBM21 domain; that stretch reads NSPPDDKAVA…NSQQLNVQVE (107 aa). Asparagine 54, asparagine 70, asparagine 98, asparagine 111, asparagine 168, asparagine 267, and asparagine 333 each carry an N-linked (GlcNAc...) asparagine glycan. The active-site Proton acceptor is the aspartate 340. Catalysis depends on glutamate 343, which acts as the Proton donor. 2 N-linked (GlcNAc...) asparagine glycosylation sites follow: asparagine 460 and asparagine 582.

Belongs to the glycosyl hydrolase 15 family.

The catalysed reaction is Hydrolysis of terminal (1-&gt;4)-linked alpha-D-glucose residues successively from non-reducing ends of the chains with release of beta-D-glucose.. This Blastobotrys adeninivorans (Yeast) protein is Glucoamylase (GAA).